The following is a 415-amino-acid chain: Putative competence-damage inducible protein (415 aa).

Belongs to the CinA family.

This chain is Putative competence-damage inducible protein, found in Limosilactobacillus reuteri (strain DSM 20016) (Lactobacillus reuteri).